The primary structure comprises 36 residues: Egg-laying hormone (36 aa).

Lysine 36 is modified (lysine amide).

This sequence belongs to the molluscan ELH family. Bag cell neurons.

It is found in the secreted. In terms of biological role, ELH acts as a neurotransmitter locally, upon neurons of the abdominal ganglion and as a hormone by diffusing into the circulating hemolymph and modulating the activity of other organs. It specifically causes contraction of smooth muscle in the ovotestis and expulsion of the egg string. This chain is Egg-laying hormone, found in Aplysia fasciata (Mottled sea hare).